Here is a 361-residue protein sequence, read N- to C-terminus: MKDSVIRKLEGLLERNEEVLALLSDPGVISDQERFRALSKEYSQLEDVVTSFKSFQQATEDLEAAKEMASDDDPELKEMAQEEMKEAKSLLEKLEDELQILLLPKDPNDDNNCFIEIRAGAGGDEAAIFAGDLFRMYSKYVESKRWQLEVMNTNEGEHGGFKEVIAKVSGEGVYGQLKFESGGHRVQRVPETESQGRVHTSACTVVVLPEIPESEAIEINKGDLKVDTFRASGAGGQHVNKTDSAIRLTHIPSGIVVECQDQRSQHKNRAQAMSVLTARIQAVEDEKRRSAEESTRRNLVGSGDRSERIRTYNFPQGRVSEHRINLTLYRLNEVMEGELDAILEPLMLENQADMLAALSEE.

Glutamine 237 bears the N5-methylglutamine mark. Over residues 285-296 (DEKRRSAEESTR) the composition is skewed to basic and acidic residues. The segment at 285–305 (DEKRRSAEESTRRNLVGSGDR) is disordered.

The protein belongs to the prokaryotic/mitochondrial release factor family. Methylated by PrmC. Methylation increases the termination efficiency of RF1.

It is found in the cytoplasm. In terms of biological role, peptide chain release factor 1 directs the termination of translation in response to the peptide chain termination codons UAG and UAA. The polypeptide is Peptide chain release factor 1 (Shewanella sediminis (strain HAW-EB3)).